The chain runs to 60 residues: 5-hydroxytryptamine receptor 2B (60 aa).

Residues 1-4 (VLCP) lie on the Extracellular side of the membrane. Residues 5 to 26 (AWLFLDVLFSTASIMHLCAISV) form a helical membrane-spanning segment. Ergotamine is bound by residues aspartate 10 and threonine 15. A DRY motif; important for ligand-induced conformation changes motif is present at residues 27-29 (DRY). Residues 27–46 (DRYIAIKKPIQANQYNSRAT) lie on the Cytoplasmic side of the membrane. The helical transmembrane segment at 47 to 60 (AFIKITVVWLISIG) threads the bilayer.

Belongs to the G-protein coupled receptor 1 family. As to quaternary structure, interacts (via C-terminus) with MPDZ. In terms of tissue distribution, detected in aorta, renal artery, jugular vein, vena cava and femoral vein.

The protein localises to the cell membrane. It localises to the synapse. It is found in the synaptosome. In terms of biological role, G-protein coupled receptor for 5-hydroxytryptamine (serotonin). Also functions as a receptor for various ergot alkaloid derivatives and psychoactive substances. Ligand binding causes a conformation change that triggers signaling via guanine nucleotide-binding proteins (G proteins) and modulates the activity of downstream effectors. HTR2B is coupled to G(q)/G(11) G alpha proteins and activates phospholipase C-beta, releasing diacylglycerol (DAG) and inositol 1,4,5-trisphosphate (IP3) second messengers that modulate the activity of phosphatidylinositol 3-kinase and promote the release of Ca(2+) ions from intracellular stores, respectively. Beta-arrestin family members inhibit signaling via G proteins and mediate activation of alternative signaling pathways. Plays a role in the regulation of dopamine and 5-hydroxytryptamine release, 5-hydroxytryptamine uptake and in the regulation of extracellular dopamine and 5-hydroxytryptamine levels, and thereby affects neural activity. May play a role in the perception of pain. Plays a role in the regulation of behavior, including impulsive behavior. Required for normal proliferation of embryonic cardiac myocytes and normal heart development. Protects cardiomyocytes against apoptosis. Plays a role in the adaptation of pulmonary arteries to chronic hypoxia. Plays a role in vasoconstriction. Required for normal osteoblast function and proliferation, and for maintaining normal bone density. Required for normal proliferation of the interstitial cells of Cajal in the intestine. The sequence is that of 5-hydroxytryptamine receptor 2B (HTR2B) from Sus scrofa (Pig).